A 1509-amino-acid polypeptide reads, in one-letter code: Myosin-2 heavy chain, non muscle (1509 aa).

The 54-residue stretch at 32-85 (SDKTLAWWPTKDADRAFCHVEVTKDDGKNFTVRLENGEEKSQPKNEKNFLGVNP) folds into the Myosin N-terminal SH3-like domain. The 699-residue stretch at 89 to 787 (DGVEDMGELG…QLAAIEELRE (699 aa)) folds into the Myosin motor domain. Lys133 bears the N6,N6,N6-trimethyllysine mark. 182-189 (GESGAGKT) serves as a coordination point for ATP. Residues 623–643 (APAEEEKAAAGGSRNRSTGRG) form a disordered region. 2 actin-binding regions span residues 660–682 (LAHLMSMLSSTAPHFIRCIIPNL) and 766–780 (RFGVTKIFFRSGQLA). Positions 790-819 (ISKMVVSIQAGARAFLARRMYDKMREQTVS) constitute an IQ domain. Residues 848–1226 (LISQRNFQKE…AERDSGAQQR (379 aa)) are alpha-helical tailpiece (S2). Positions 848-1509 (LISQRNFQKE…VRAGSARAEE (662 aa)) form a coiled coil. Basic and acidic residues-rich tracts occupy residues 958–1019 (ELKA…KDAL), 1034–1047 (KNTERGADDVRNEL), 1097–1107 (EDARSEVDSLK), 1115–1141 (KSLKTAKDQNRDLDEQLEDERTVRANV), and 1179–1189 (QVDETKRRLEE). 6 disordered regions span residues 958-1049 (ELKA…ELDD), 1068-1141 (LAQT…RANV), 1170-1195 (AAQAKTLKTQVDETKRRLEEAEASAA), 1213-1259 (ADLD…RLEG), 1352-1425 (VAKE…NREL), and 1474-1509 (QLQDEIDGTPSSRGGSTRGASARGASVRAGSARAEE). The tract at residues 1227-1252 (RKLNTRISELQSELENAPKTGGASSE) is hinge. Over residues 1231 to 1240 (TRISELQSEL) the composition is skewed to polar residues. Residues 1253 to 1482 (EVKRLEGELE…AQLQDEIDGT (230 aa)) are alpha-helical tailpiece (LMM). The light meromyosin (LMM) stretch occupies residues 1253-1509 (EVKRLEGELE…VRAGSARAEE (257 aa)). The segment at 1483 to 1509 (PSSRGGSTRGASARGASVRAGSARAEE) is nonhelical tailpiece. Residues 1484 to 1509 (SSRGGSTRGASARGASVRAGSARAEE) are compositionally biased toward low complexity. Phosphoserine occurs at positions 1489, 1494, and 1499.

Belongs to the TRAFAC class myosin-kinesin ATPase superfamily. Myosin family. As to quaternary structure, myosin II heavy chain is two-headed. It self-assembles into filaments. Hexamer of 2 heavy chain subunits (MHC), 2 alkali light chain subunits (MLC) and 2 regulatory light chain subunits (MLC-2).

Its function is as follows. Myosin is a protein that binds to F-actin and has ATPase activity that is activated by F-actin. The polypeptide is Myosin-2 heavy chain, non muscle (Acanthamoeba castellanii (Amoeba)).